The chain runs to 356 residues: DNA polymerase IV (356 aa).

The 182-residue stretch at 7-188 (IIHIDMDCFY…LPLKKIPGVG (182 aa)) folds into the UmuC domain. Positions 11 and 106 each coordinate Mg(2+). Residue E107 is part of the active site.

Belongs to the DNA polymerase type-Y family. In terms of assembly, monomer. The cofactor is Mg(2+).

It localises to the cytoplasm. It carries out the reaction DNA(n) + a 2'-deoxyribonucleoside 5'-triphosphate = DNA(n+1) + diphosphate. Its function is as follows. Poorly processive, error-prone DNA polymerase involved in untargeted mutagenesis. Copies undamaged DNA at stalled replication forks, which arise in vivo from mismatched or misaligned primer ends. These misaligned primers can be extended by PolIV. Exhibits no 3'-5' exonuclease (proofreading) activity. May be involved in translesional synthesis, in conjunction with the beta clamp from PolIII. The sequence is that of DNA polymerase IV from Actinobacillus pleuropneumoniae serotype 3 (strain JL03).